A 324-amino-acid chain; its full sequence is Brorin (324 aa).

The N-terminal stretch at 1–27 is a signal peptide; it reads MPSSSAMAVGALSSSLLVTCCLMVALC. The interval 37 to 126 is disordered; sequence AQAPEQPGQE…TPQGEPPAAA (90 aa). Composition is skewed to basic and acidic residues over residues 44–56 and 64–78; these read GQEK…RDSP and RASR…DWKS. The segment covering 92-107 has biased composition (low complexity); that stretch reads KQKQAWAAQGGSAKAA. Positions 114–116 match the Mediates cell adhesion motif; that stretch reads RGD. VWFC domains follow at residues 152-211 and 215-273; these read KGCV…PQCK and NYCE…PICK.

Peripherally associated with AMPAR complex. AMPAR complex consists of an inner core made of 4 pore-forming GluA/GRIA proteins (GRIA1, GRIA2, GRIA3 and GRIA4) and 4 major auxiliary subunits arranged in a twofold symmetry. One of the two pairs of distinct binding sites is occupied either by CNIH2, CNIH3 or CACNG2, CACNG3. The other harbors CACNG2, CACNG3, CACNG4, CACNG8 or GSG1L. This inner core of AMPAR complex is complemented by outer core constituents binding directly to the GluA/GRIA proteins at sites distinct from the interaction sites of the inner core constituents. Outer core constituents include at least PRRT1, PRRT2, CKAMP44/SHISA9, FRRS1L and NRN1. The proteins of the inner and outer core serve as a platform for other, more peripherally associated AMPAR constituents, including VWC2. Alone or in combination, these auxiliary subunits control the gating and pharmacology of the AMPAR complex and profoundly impact their biogenesis and protein processing. In terms of tissue distribution, predominantly expressed in the brain (at protein level). It is expressed in the neurons but not the glial cells.

The protein localises to the secreted. It is found in the extracellular space. The protein resides in the extracellular matrix. Its subcellular location is the basement membrane. It localises to the synapse. Functionally, BMP antagonist which may play a role in neural development. Promotes cell adhesion. The protein is Brorin (Vwc2) of Mus musculus (Mouse).